A 761-amino-acid polypeptide reads, in one-letter code: MAEIMTALIICEKPSVAKKIANALGKAKKKSIDGVPYYELERDGKKIIVASAVGHLFTLVEKENKEFGFYPVFDIKWVPASVDKGKEYVNKYIKALKKLSKDADEFYIATDWDIEGELIGYHALKYCCGREKAKRMRFSSLTKKEIVRAFENPDEIDYGLVDAGESRHILDWYFGINLSRALMNAIRAVNRWKTMSVGRVQGPALAFLTERELEIKKFIPKPYWVIEALLKDNLKAIHEKEKFWNEKEAKNVYEKIKDEKSAKVVEIKKTKRKLKPLPPFDLGTLQREAYSYFKISPKETQEIAQKLYENALISYPRTSSQKLPKDRKYLEDILNIIKNHPVYGKWAERILKENLKPVEGKKEDPAHPAIHIVDIPKEELSEKEKEIYDLIARRTLAAFWDNAEREYLNVKIDIKGEKFKLSGSRTVKEGWHEIYYFPKFDEIELPPLKKNDIIKVEKITITRKETQPPKRYTVASIIKELEKRGLGTKATRAEIIDKLIKRGYVIDDGSLKVTDLGISVIETLKRFCPEIIDEKMTRDLEEKLEKIQFRKIKKDDVLDEAEKRLRKILEEFKKKEEDIGIYLIKNLDATNKKAKIVGKCPKCGGDLILIRHKKGRFVGCSNYPECDVKYSLPDKGRIKIPNKVCDACKSPILKIGDREICINPECPLKQVEVKEEDRICPKCGAKLILKKGVYGAFYGCSNYPKCKYTEPINKKEVVGKCPKCGGDLVVREGKFGKFVGCSNYPKCRYTEKLKLNEKEEK.

Residues 6 to 143 form the Toprim domain; the sequence is TALIICEKPS…KRMRFSSLTK (138 aa). Residues E12 and D111 each contribute to the Mg(2+) site. Residues 157 to 569 form the Topo IA-type catalytic domain; the sequence is DYGLVDAGES…EAEKRLRKIL (413 aa). Residues 196–201 form an interaction with DNA region; it reads SVGRVQ. The active-site O-(5'-phospho-DNA)-tyrosine intermediate is Y315. C4-type zinc fingers lie at residues 600 to 626, 680 to 706, and 721 to 747; these read CPKC…YPEC and CPKC…YPKC.

The protein belongs to the type IA topoisomerase family. As to quaternary structure, monomer. It depends on Mg(2+) as a cofactor.

The catalysed reaction is ATP-independent breakage of single-stranded DNA, followed by passage and rejoining.. In terms of biological role, releases the supercoiling and torsional tension of DNA, which is introduced during the DNA replication and transcription, by transiently cleaving and rejoining one strand of the DNA duplex. Introduces a single-strand break via transesterification at a target site in duplex DNA. The scissile phosphodiester is attacked by the catalytic tyrosine of the enzyme, resulting in the formation of a DNA-(5'-phosphotyrosyl)-enzyme intermediate and the expulsion of a 3'-OH DNA strand. The free DNA strand then undergoes passage around the unbroken strand, thus removing DNA supercoils. Finally, in the religation step, the DNA 3'-OH attacks the covalent intermediate to expel the active-site tyrosine and restore the DNA phosphodiester backbone. The polypeptide is DNA topoisomerase 1 (Methanocaldococcus jannaschii (strain ATCC 43067 / DSM 2661 / JAL-1 / JCM 10045 / NBRC 100440) (Methanococcus jannaschii)).